The sequence spans 300 residues: UDP-N-acetylenolpyruvoylglucosamine reductase (300 aa).

One can recognise an FAD-binding PCMH-type domain in the interval 27 to 216 (RVGGPADVIF…TERREKTQPI (190 aa)). The active site involves R172. The Proton donor role is filled by S223. E293 is an active-site residue.

It belongs to the MurB family. The cofactor is FAD.

The protein resides in the cytoplasm. The catalysed reaction is UDP-N-acetyl-alpha-D-muramate + NADP(+) = UDP-N-acetyl-3-O-(1-carboxyvinyl)-alpha-D-glucosamine + NADPH + H(+). The protein operates within cell wall biogenesis; peptidoglycan biosynthesis. Functionally, cell wall formation. This is UDP-N-acetylenolpyruvoylglucosamine reductase from Phenylobacterium zucineum (strain HLK1).